A 595-amino-acid polypeptide reads, in one-letter code: Probable Xaa-Pro aminopeptidase CHGG_02942 (595 aa).

Positions 51–76 (KSGPSSSNLSPSTLSTEKTSSDSSGV) are disordered. Low complexity predominate over residues 52–66 (SGPSSSNLSPSTLST). Residues Asp334, Asp345, Glu541, and Glu563 each contribute to the Mn(2+) site.

The protein belongs to the peptidase M24B family. It depends on Mn(2+) as a cofactor.

The catalysed reaction is Release of any N-terminal amino acid, including proline, that is linked to proline, even from a dipeptide or tripeptide.. Functionally, catalyzes the removal of a penultimate prolyl residue from the N-termini of peptides. This chain is Probable Xaa-Pro aminopeptidase CHGG_02942, found in Chaetomium globosum (strain ATCC 6205 / CBS 148.51 / DSM 1962 / NBRC 6347 / NRRL 1970) (Soil fungus).